A 41-amino-acid chain; its full sequence is Maticotoxin A (41 aa).

Disulfide bonds link Cys-3–Cys-22 and Cys-15–Cys-39.

Belongs to the three-finger toxin family. Short-chain subfamily. In terms of tissue distribution, expressed by the venom gland.

The protein localises to the secreted. This chain is Maticotoxin A, found in Calliophis bivirgatus (Blue Malaysian coral snake).